We begin with the raw amino-acid sequence, 147 residues long: Hemoglobin subunit beta (147 aa).

The Globin domain maps to 2 to 147 (HWEDAEKQYI…ISHSLGREYH (146 aa)). 2 residues coordinate heme b: His-63 and His-92.

Belongs to the globin family. Heterotetramer of two alpha chains and two beta chains. In terms of tissue distribution, red blood cells.

In terms of biological role, involved in oxygen transport from the lung to the various peripheral tissues. The protein is Hemoglobin subunit beta (HBB) of Lepidosiren paradoxus (South American lungfish).